The following is a 494-amino-acid chain: Trigger factor (494 aa).

The region spanning 169 to 254 (GDRITMDYVG…VKDVAAPGAV (86 aa)) is the PPIase FKBP-type domain. The disordered stretch occupies residues 440–494 (LLAEDEGEAKAETKKAAPKKKAAAKSEAAEAGEGEEAAPKKKAAPKKKASEDSAE).

The protein belongs to the FKBP-type PPIase family. Tig subfamily.

It is found in the cytoplasm. It carries out the reaction [protein]-peptidylproline (omega=180) = [protein]-peptidylproline (omega=0). Involved in protein export. Acts as a chaperone by maintaining the newly synthesized protein in an open conformation. Functions as a peptidyl-prolyl cis-trans isomerase. In Rhizobium etli (strain ATCC 51251 / DSM 11541 / JCM 21823 / NBRC 15573 / CFN 42), this protein is Trigger factor.